The chain runs to 302 residues: Sulfate adenylyltransferase subunit 2 (302 aa).

This sequence belongs to the PAPS reductase family. CysD subfamily. Heterodimer composed of CysD, the smaller subunit, and CysN.

It catalyses the reaction sulfate + ATP + H(+) = adenosine 5'-phosphosulfate + diphosphate. It functions in the pathway sulfur metabolism; hydrogen sulfide biosynthesis; sulfite from sulfate: step 1/3. In terms of biological role, with CysN forms the ATP sulfurylase (ATPS) that catalyzes the adenylation of sulfate producing adenosine 5'-phosphosulfate (APS) and diphosphate, the first enzymatic step in sulfur assimilation pathway. APS synthesis involves the formation of a high-energy phosphoric-sulfuric acid anhydride bond driven by GTP hydrolysis by CysN coupled to ATP hydrolysis by CysD. This chain is Sulfate adenylyltransferase subunit 2, found in Shigella boydii serotype 4 (strain Sb227).